We begin with the raw amino-acid sequence, 648 residues long: DNA polymerase (648 aa).

Belongs to the DNA polymerase type-A family.

It catalyses the reaction DNA(n) + a 2'-deoxyribonucleoside 5'-triphosphate = DNA(n+1) + diphosphate. Functionally, replicates the viral genomic DNA. This polymerase possesses two enzymatic activities: DNA synthesis (polymerase) and an exonucleolytic activity that degrades single-stranded DNA in the 3'-5' direction. This Bacillus subtilis (Bacteriophage SP02) protein is DNA polymerase (L).